The following is a 58-amino-acid chain: Probable mRNA interferase HicA 2 (58 aa).

The protein belongs to the HicA mRNA interferase family. As to quaternary structure, probably forms a complex with the cognate antitoxin HicB 2 which inhibits the mRNA interferase activity.

Toxic component of a type II toxin-antitoxin (TA) system. A probable translation-independent mRNA interferase. This is Probable mRNA interferase HicA 2 (hicA2) from Photorhabdus laumondii subsp. laumondii (strain DSM 15139 / CIP 105565 / TT01) (Photorhabdus luminescens subsp. laumondii).